The primary structure comprises 603 residues: Translation initiation factor IF-2 (603 aa).

The tr-type G domain occupies 112–279 (TRPPIITIMG…NINLQAEILD (168 aa)). The G1 stretch occupies residues 121–128 (GHVDHGKT). Residue 121–128 (GHVDHGKT) participates in GTP binding. The segment at 146-150 (GITQH) is G2. Positions 167 to 170 (DTPG) are G3. GTP is bound by residues 167-171 (DTPGH) and 221-224 (NKMD). Positions 221 to 224 (NKMD) are G4. The tract at residues 257 to 259 (SAL) is G5.

The protein belongs to the TRAFAC class translation factor GTPase superfamily. Classic translation factor GTPase family. IF-2 subfamily.

It is found in the cytoplasm. Functionally, one of the essential components for the initiation of protein synthesis. Protects formylmethionyl-tRNA from spontaneous hydrolysis and promotes its binding to the 30S ribosomal subunits. Also involved in the hydrolysis of GTP during the formation of the 70S ribosomal complex. The chain is Translation initiation factor IF-2 from Mycoplasmopsis pulmonis (strain UAB CTIP) (Mycoplasma pulmonis).